We begin with the raw amino-acid sequence, 161 residues long: Ribonuclease H (161 aa).

One can recognise an RNase H type-1 domain in the interval 3–144; that stretch reads VLKQLSIFTD…CDTLARVAAE (142 aa). 4 residues coordinate Mg(2+): Asp12, Glu50, Asp72, and Asp136.

It belongs to the RNase H family. As to quaternary structure, monomer. Mg(2+) serves as cofactor.

It is found in the cytoplasm. It catalyses the reaction Endonucleolytic cleavage to 5'-phosphomonoester.. Functionally, endonuclease that specifically degrades the RNA of RNA-DNA hybrids. This Shewanella woodyi (strain ATCC 51908 / MS32) protein is Ribonuclease H.